The chain runs to 211 residues: Ubiquitin-conjugating enzyme E2 S (211 aa).

The UBC core domain maps to 11–157; the sequence is HIIRQVYKEV…ARLMTEIHAQ (147 aa). C95 (glycyl thioester intermediate) is an active-site residue. A disordered region spans residues 157–211; it reads QGSSLRGKDPTDPCSSASATLVSGDGPMAKKHAGDRDKKLAAKKKTDKKRALRRL. Positions 197–211 are enriched in basic residues; it reads AAKKKTDKKRALRRL.

It belongs to the ubiquitin-conjugating enzyme family.

It carries out the reaction S-ubiquitinyl-[E1 ubiquitin-activating enzyme]-L-cysteine + [E2 ubiquitin-conjugating enzyme]-L-cysteine = [E1 ubiquitin-activating enzyme]-L-cysteine + S-ubiquitinyl-[E2 ubiquitin-conjugating enzyme]-L-cysteine.. Its pathway is protein modification; protein ubiquitination. Functionally, catalyzes the covalent attachment of ubiquitin to other proteins. Acts as an essential factor of the anaphase promoting complex/cyclosome (APC/C), a cell cycle-regulated ubiquitin ligase that controls progression through mitosis. Acts by specifically elongating 'Lys-11'-linked polyubiquitin chains initiated by the E2 enzyme ube2c/ubch10 on APC/C substrates, enhancing the degradation of APC/C substrates by the proteasome and promoting mitotic exit. The polypeptide is Ubiquitin-conjugating enzyme E2 S (ube2s) (Xenopus tropicalis (Western clawed frog)).